Reading from the N-terminus, the 580-residue chain is 3-(3-hydroxy-phenyl)propionate/3-hydroxycinnamic acid hydroxylase (580 aa).

FAD is bound by residues 14 to 43 (DVLV…VVEE) and 291 to 301 (FRRGRLLLAGD).

It belongs to the PheA/TfdB FAD monooxygenase family. FAD serves as cofactor.

The enzyme catalyses 3-(3-hydroxyphenyl)propanoate + NADH + O2 + H(+) = 3-(2,3-dihydroxyphenyl)propanoate + NAD(+) + H2O. It catalyses the reaction (2E)-3-(3-hydroxyphenyl)prop-2-enoate + NADH + O2 + H(+) = (2E)-3-(2,3-dihydroxyphenyl)prop-2-enoate + NAD(+) + H2O. Its pathway is aromatic compound metabolism; 3-phenylpropanoate degradation. Catalyzes the insertion of one atom of molecular oxygen into position 2 of the phenyl ring of 3-(3-hydroxyphenyl)propionate (3-HPP) and hydroxycinnamic acid (3HCI). This Mycobacterium avium (strain 104) protein is 3-(3-hydroxy-phenyl)propionate/3-hydroxycinnamic acid hydroxylase.